Here is a 290-residue protein sequence, read N- to C-terminus: 4-hydroxybenzoate octaprenyltransferase (290 aa).

Transmembrane regions (helical) follow at residues 38–58 (LAGMAIPALGTLTVFILGVFF), 99–119 (LFGALVGISFALVLTLNSMTI), 141–161 (LPQLVLGAAFGWSIPMVFTAV), 213–233 (LIIGLLQLATLLLLGVIGWQL), 238–258 (IYYLALAGAAGLFLWQQKLIV), and 268–288 (AFLNNNLVGMLIFVGILLSLL).

This sequence belongs to the UbiA prenyltransferase family. Requires Mg(2+) as cofactor.

The protein resides in the cell inner membrane. It catalyses the reaction all-trans-octaprenyl diphosphate + 4-hydroxybenzoate = 4-hydroxy-3-(all-trans-octaprenyl)benzoate + diphosphate. It participates in cofactor biosynthesis; ubiquinone biosynthesis. Functionally, catalyzes the prenylation of para-hydroxybenzoate (PHB) with an all-trans polyprenyl group. Mediates the second step in the final reaction sequence of ubiquinone-8 (UQ-8) biosynthesis, which is the condensation of the polyisoprenoid side chain with PHB, generating the first membrane-bound Q intermediate 3-octaprenyl-4-hydroxybenzoate. The sequence is that of 4-hydroxybenzoate octaprenyltransferase from Sodalis glossinidius (strain morsitans).